We begin with the raw amino-acid sequence, 119 residues long: Insulin growth factor-like family member 2 (119 aa).

Positions 1–25 are cleaved as a signal peptide; the sequence is MVPRIFAPAYVSVCLLLLCPREVIA.

The protein belongs to the IGFL family. Detected in cerebellum, heart, placenta, spleen, stomach, testis and thymus.

The protein resides in the secreted. Its function is as follows. Potential ligand of the IGFLR1 cell membrane receptor. The sequence is that of Insulin growth factor-like family member 2 (IGFL2) from Homo sapiens (Human).